We begin with the raw amino-acid sequence, 155 residues long: 6,7-dimethyl-8-ribityllumazine synthase (155 aa).

Residues Phe-24, 58-60, and 82-84 contribute to the 5-amino-6-(D-ribitylamino)uracil site; these read AFE and VII. (2S)-2-hydroxy-3-oxobutyl phosphate is bound at residue 87–88; the sequence is ST. Catalysis depends on His-90, which acts as the Proton donor. Phe-115 provides a ligand contact to 5-amino-6-(D-ribitylamino)uracil. Arg-129 is a (2S)-2-hydroxy-3-oxobutyl phosphate binding site.

The protein belongs to the DMRL synthase family.

The catalysed reaction is (2S)-2-hydroxy-3-oxobutyl phosphate + 5-amino-6-(D-ribitylamino)uracil = 6,7-dimethyl-8-(1-D-ribityl)lumazine + phosphate + 2 H2O + H(+). It functions in the pathway cofactor biosynthesis; riboflavin biosynthesis; riboflavin from 2-hydroxy-3-oxobutyl phosphate and 5-amino-6-(D-ribitylamino)uracil: step 1/2. Its function is as follows. Catalyzes the formation of 6,7-dimethyl-8-ribityllumazine by condensation of 5-amino-6-(D-ribitylamino)uracil with 3,4-dihydroxy-2-butanone 4-phosphate. This is the penultimate step in the biosynthesis of riboflavin. This is 6,7-dimethyl-8-ribityllumazine synthase from Chlorobium phaeobacteroides (strain DSM 266 / SMG 266 / 2430).